A 269-amino-acid polypeptide reads, in one-letter code: Signal recognition particle receptor subunit beta (269 aa).

Residues 35–55 traverse the membrane as a helical segment; it reads LLSVAVAVLAVLLTLVFWKFI. GTP is bound by residues 69–77 and 90–93; these read GLCDSGKTL and TQTS. Serine 110 is subject to Phosphoserine. Residue glycine 118 coordinates GTP. The residue at position 212 (threonine 212) is a Phosphothreonine. Residue alanine 246 coordinates GTP.

Belongs to the SRP receptor beta subunit family. In terms of assembly, heterodimer with SRPRA.

It localises to the endoplasmic reticulum membrane. Component of the signal recognition particle (SRP) complex receptor (SR). Ensures, in conjunction with the SRP complex, the correct targeting of the nascent secretory proteins to the endoplasmic reticulum membrane system. May mediate the membrane association of SR. The polypeptide is Signal recognition particle receptor subunit beta (Srprb) (Rattus norvegicus (Rat)).